Consider the following 678-residue polypeptide: Zinc finger translocation-associated protein (678 aa).

Disordered regions lie at residues 1–100 (MEPG…PGRD), 182–250 (LGVQ…GSRG), 329–417 (QPEA…HRRH), and 490–583 (LGPP…NYQP). Over residues 62 to 78 (SAPLPSSRARGPASSGR) the composition is skewed to low complexity. Residues 79 to 88 (KYSDHCEARA) show a composition bias toward basic and acidic residues. The segment covering 187–201 (AEEEEEEEEEEEEEG) has biased composition (acidic residues). A Glycyl lysine isopeptide (Lys-Gly) (interchain with G-Cter in SUMO2) cross-link involves residue K375. The segment covering 388–398 (AEEEEELEEGE) has biased composition (acidic residues). Residues 492-504 (PPRPESPQGPIPP) are compositionally biased toward pro residues. Acidic residues-rich tracts occupy residues 513–529 (GGGD…EEWG) and 543–553 (AEEEEDEEDGQ). Positions 560–572 (LPPPPPPPPPPPP) are enriched in pro residues. The span at 573–583 (RSREQRRNYQP) shows a compositional bias: basic and acidic residues.

The protein is Zinc finger translocation-associated protein of Homo sapiens (Human).